Here is a 599-residue protein sequence, read N- to C-terminus: Aspartate--tRNA ligase (599 aa).

E180 serves as a coordination point for L-aspartate. Residues Q204 to K207 form an aspartate region. R226 is a binding site for L-aspartate. ATP-binding positions include R226–E228 and Q235. Position 454 (H454) interacts with L-aspartate. ATP is bound at residue E488. R495 lines the L-aspartate pocket. G540–R543 lines the ATP pocket.

The protein belongs to the class-II aminoacyl-tRNA synthetase family. Type 1 subfamily. As to quaternary structure, homodimer.

Its subcellular location is the cytoplasm. The catalysed reaction is tRNA(Asp) + L-aspartate + ATP = L-aspartyl-tRNA(Asp) + AMP + diphosphate. In terms of biological role, catalyzes the attachment of L-aspartate to tRNA(Asp) in a two-step reaction: L-aspartate is first activated by ATP to form Asp-AMP and then transferred to the acceptor end of tRNA(Asp). The sequence is that of Aspartate--tRNA ligase from Clostridium beijerinckii (strain ATCC 51743 / NCIMB 8052) (Clostridium acetobutylicum).